A 256-amino-acid polypeptide reads, in one-letter code: Floral homeotic protein APETALA 1 (256 aa).

Positions 1–61 (MGRGRVQLKR…GKLFEYSTDS (61 aa)) constitute an MADS-box domain. In terms of domain architecture, K-box spans 88-178 (NTNWSMEYNR…SKQIKEREKI (91 aa)). The interval 184–206 (EQWDQQNHGHNMPPPPPPQQHQI) is disordered.

In terms of assembly, homodimer capable of binding to CArG-box sequences.

The protein resides in the nucleus. Transcription factor that promotes early floral meristem identity in synergy with LEAFY. Displays a redundant function with CAULIFLOWER in the up-regulation of LEAFY. Required subsequently for the transition of an inflorescence meristem into a floral meristem, and for the normal development of sepals and petals in flowers. Regulates positively B class homeotic proteins. In Arabidopsis lyrata subsp. lyrata (Lyre-leaved rock-cress), this protein is Floral homeotic protein APETALA 1 (AP1).